The sequence spans 141 residues: Hemoglobin subunit alpha-D (141 aa).

One can recognise a Globin domain in the interval 1-141 (MLSADEKQLI…VSDVLAEKYR (141 aa)). The heme b site is built by His-58 and His-87.

It belongs to the globin family. As to quaternary structure, heterotetramer of two alpha-D chains and two beta chains. As to expression, red blood cells.

In terms of biological role, involved in oxygen transport from the lung to the various peripheral tissues. The polypeptide is Hemoglobin subunit alpha-D (HBAD) (Phrynops hilarii (Snake-necked turtle)).